Here is an 81-residue protein sequence, read N- to C-terminus: Prophage excisionase-like protein (81 aa).

The protein to lambdoid phages excisionases.

The polypeptide is Prophage excisionase-like protein (xisE) (Escherichia coli (strain K12)).